We begin with the raw amino-acid sequence, 375 residues long: tRNA-specific 2-thiouridylase MnmA (375 aa).

Residues 18-25 (GMSGGVDS) and Met-44 contribute to the ATP site. Positions 104–106 (NPD) are interaction with target base in tRNA. Cys-109 (nucleophile) is an active-site residue. Residues Cys-109 and Cys-206 are joined by a disulfide bond. Gly-134 serves as a coordination point for ATP. An interaction with tRNA region spans residues 156-158 (KDQ). Residue Cys-206 is the Cysteine persulfide intermediate of the active site. Residues 318–319 (RY) form an interaction with tRNA region.

It belongs to the MnmA/TRMU family.

It localises to the cytoplasm. It catalyses the reaction S-sulfanyl-L-cysteinyl-[protein] + uridine(34) in tRNA + AH2 + ATP = 2-thiouridine(34) in tRNA + L-cysteinyl-[protein] + A + AMP + diphosphate + H(+). Its function is as follows. Catalyzes the 2-thiolation of uridine at the wobble position (U34) of tRNA, leading to the formation of s(2)U34. This Colwellia psychrerythraea (strain 34H / ATCC BAA-681) (Vibrio psychroerythus) protein is tRNA-specific 2-thiouridylase MnmA.